Consider the following 86-residue polypeptide: Putative membrane protein insertion efficiency factor (86 aa).

The tract at residues 66-86 (PLHEGGDDPVPPRKNDDNREN) is disordered.

Belongs to the UPF0161 family.

The protein resides in the cell inner membrane. Could be involved in insertion of integral membrane proteins into the membrane. The sequence is that of Putative membrane protein insertion efficiency factor from Proteus mirabilis (strain HI4320).